The following is a 492-amino-acid chain: Probable endopolygalacturonase D (492 aa).

An N-terminal signal peptide occupies residues 1–16; sequence MKRSALILSFLPLVFG. Cysteine 151 and cysteine 166 are joined by a disulfide. PbH1 repeat units follow at residues 216 to 238, 258 to 280, 281 to 319, and 320 to 341; these read GTSVTITGVEGHVIDGNGAAYWD, MYNSRIENLYIQNWPVHCFEIES, TEHLTVSGLTLNNSAGDAANSKSDGDPAAHNSDGFDIKE, and SSYFTLENTWVHNQDDCVAVTS. An N-linked (GlcNAc...) asparagine glycan is attached at asparagine 292. Aspartate 334 (proton donor) is an active-site residue. Cysteine 336 and cysteine 352 are disulfide-bonded. Residue histidine 356 is part of the active site. 3 PbH1 repeats span residues 371–392, 400–422, and 434–478; these read VNGVTFSNSQVISSQNGCRIKT, VYNIRYENITLSDISDYGIDVQQ, and TNGV…SITG. N-linked (GlcNAc...) asparagine glycans are attached at residues asparagine 407 and asparagine 441. Intrachain disulfides connect cysteine 461-cysteine 466 and cysteine 484-cysteine 491.

It belongs to the glycosyl hydrolase 28 family.

The protein localises to the secreted. It carries out the reaction (1,4-alpha-D-galacturonosyl)n+m + H2O = (1,4-alpha-D-galacturonosyl)n + (1,4-alpha-D-galacturonosyl)m.. Its function is as follows. Involved in maceration and soft-rotting of plant tissue. Hydrolyzes the 1,4-alpha glycosidic bonds of de-esterified pectate in the smooth region of the plant cell wall. This chain is Probable endopolygalacturonase D (pgaD), found in Aspergillus flavus (strain ATCC 200026 / FGSC A1120 / IAM 13836 / NRRL 3357 / JCM 12722 / SRRC 167).